The primary structure comprises 156 residues: Transcription elongation factor GreA (156 aa).

Residues Met1 to Glu84 are a coiled coil.

This sequence belongs to the GreA/GreB family.

In terms of biological role, necessary for efficient RNA polymerase transcription elongation past template-encoded arresting sites. The arresting sites in DNA have the property of trapping a certain fraction of elongating RNA polymerases that pass through, resulting in locked ternary complexes. Cleavage of the nascent transcript by cleavage factors such as GreA or GreB allows the resumption of elongation from the new 3'terminus. GreA releases sequences of 2 to 3 nucleotides. This Ureaplasma urealyticum serovar 10 (strain ATCC 33699 / Western) protein is Transcription elongation factor GreA.